Here is a 760-residue protein sequence, read N- to C-terminus: MSPFELEFEGLKVQIGSIEGFEPRGEGPLPCPTVSDLADWDRKLFARYRVIAFPICDMCCMCTYGRCNLAEGRRGACGIDIRSNTARFTALKTCIGAACHAAHARHLVEYILEKLGDVEIDLGSEVDVMTPIFETLVGFKPKTVSDLEKGLEYIERELTKVLSSVHVGQEMDPHDYESKALHAGMIDNLALEIADVAQIAAFDMPKGEAPLVEFGPFAADDSKPCILLVGHNVAPGTEVLDYLEERGLDEEVEVLGICCTAWDVSRVDDRSKVIGPLSRQLHYVRMGIADVVVLDEQCIRADIVEEANEVGSRVIATRDLVMAGLPDVTDEPTEKIIEKMVSGEWMGVFIEDLEKAAEVAVEVAIRVHERRKKEIPQPDPKKLQKEAKRCLGCGDCERVCPNDLPIVEAMERAANGDFEGLADLFDRCVGCARCESECPTKLRVMNMIEDAWRLRTKEEKYKVRTGRGPIKDVEIRQVGGPIVMGDIPGVVAFVACPNYPDDVKQVGKMVEELLERNYIVLTSGCTAMALGMYTDEDGKTLYEKYEDRFDAGCLVNTGSCVSNAHILGACIKIAAIFAKKPLKGNFKEIADYILNRIGACGVLWGTMSQKALAISTGFTRWGIPIVYGPAGLKYQTLYIGDLDGDWTVYDARTGKECKEYCPIHLKYAAEDWREALVQAVKLCIRPNDTPQGRQTKLQNYIELYKEFYNELPPDLPLYVRDKNDVPITLRDEVMEYLEEVGWKPRKGITEPTLLEENVRG.

6 residues coordinate [4Fe-4S] cluster: C56, C59, C60, C62, C67, and C77. Residue H100 participates in CO binding. [Ni-4Fe-4S] cluster-binding residues include H231, C259, and C298. 4Fe-4S ferredoxin-type domains follow at residues 381–410 (KKLQKEAKRCLGCGDCERVCPNDLPIVEAM) and 418–450 (FEGLADLFDRCVGCARCESECPTKLRVMNMIED). [4Fe-4S] cluster-binding residues include C390, C393, C396, C400, C428, C431, C434, and C438. [Ni-4Fe-4S] cluster contacts are provided by C496, C525, and C560.

It belongs to the Ni-containing carbon monoxide dehydrogenase family. Heterotetramer of two alpha and two epsilon subunits. The ACDS complex is made up of alpha, epsilon, beta, gamma and delta subunits with a probable stoichiometry of (alpha(2)epsilon(2))(4)-beta(8)-(gamma(1)delta(1))(8). [4Fe-4S] cluster is required as a cofactor. [Ni-4Fe-4S] cluster serves as cofactor.

The catalysed reaction is CO + 2 oxidized [2Fe-2S]-[ferredoxin] + H2O = 2 reduced [2Fe-2S]-[ferredoxin] + CO2 + 2 H(+). In terms of biological role, part of the ACDS complex that catalyzes the reversible cleavage of acetyl-CoA, allowing autotrophic growth from CO(2). The alpha-epsilon subcomponent functions as a carbon monoxide dehydrogenase. The polypeptide is Acetyl-CoA decarbonylase/synthase complex subunit alpha 1 (Methanopyrus kandleri (strain AV19 / DSM 6324 / JCM 9639 / NBRC 100938)).